The chain runs to 300 residues: NAD kinase (300 aa).

Catalysis depends on Asp-78, which acts as the Proton acceptor. NAD(+) is bound by residues 78 to 79 (DG), 152 to 153 (ND), His-163, Arg-180, Asp-182, and 193 to 198 (TAYALS).

Belongs to the NAD kinase family. A divalent metal cation serves as cofactor.

It localises to the cytoplasm. It carries out the reaction NAD(+) + ATP = ADP + NADP(+) + H(+). Functionally, involved in the regulation of the intracellular balance of NAD and NADP, and is a key enzyme in the biosynthesis of NADP. Catalyzes specifically the phosphorylation on 2'-hydroxyl of the adenosine moiety of NAD to yield NADP. This Alcanivorax borkumensis (strain ATCC 700651 / DSM 11573 / NCIMB 13689 / SK2) protein is NAD kinase.